Here is a 360-residue protein sequence, read N- to C-terminus: Phosphoserine aminotransferase (360 aa).

Position 42 (R42) interacts with L-glutamate. Residues W102, T152, D171, and Q194 each coordinate pyridoxal 5'-phosphate. N6-(pyridoxal phosphate)lysine is present on K195. 237–238 is a binding site for pyridoxal 5'-phosphate; sequence NT.

Belongs to the class-V pyridoxal-phosphate-dependent aminotransferase family. SerC subfamily. As to quaternary structure, homodimer. The cofactor is pyridoxal 5'-phosphate.

The protein resides in the cytoplasm. It carries out the reaction O-phospho-L-serine + 2-oxoglutarate = 3-phosphooxypyruvate + L-glutamate. It catalyses the reaction 4-(phosphooxy)-L-threonine + 2-oxoglutarate = (R)-3-hydroxy-2-oxo-4-phosphooxybutanoate + L-glutamate. Its pathway is amino-acid biosynthesis; L-serine biosynthesis; L-serine from 3-phospho-D-glycerate: step 2/3. It participates in cofactor biosynthesis; pyridoxine 5'-phosphate biosynthesis; pyridoxine 5'-phosphate from D-erythrose 4-phosphate: step 3/5. Catalyzes the reversible conversion of 3-phosphohydroxypyruvate to phosphoserine and of 3-hydroxy-2-oxo-4-phosphonooxybutanoate to phosphohydroxythreonine. In Coxiella burnetii (strain RSA 331 / Henzerling II), this protein is Phosphoserine aminotransferase.